A 325-amino-acid polypeptide reads, in one-letter code: Tetraacyldisaccharide 4'-kinase (325 aa).

Residue 55 to 62 (TAGGNGKT) coordinates ATP.

This sequence belongs to the LpxK family.

It carries out the reaction a lipid A disaccharide + ATP = a lipid IVA + ADP + H(+). The protein operates within glycolipid biosynthesis; lipid IV(A) biosynthesis; lipid IV(A) from (3R)-3-hydroxytetradecanoyl-[acyl-carrier-protein] and UDP-N-acetyl-alpha-D-glucosamine: step 6/6. Functionally, transfers the gamma-phosphate of ATP to the 4'-position of a tetraacyldisaccharide 1-phosphate intermediate (termed DS-1-P) to form tetraacyldisaccharide 1,4'-bis-phosphate (lipid IVA). In Salmonella paratyphi A (strain ATCC 9150 / SARB42), this protein is Tetraacyldisaccharide 4'-kinase.